A 153-amino-acid polypeptide reads, in one-letter code: Transcriptional repressor NrdR (153 aa).

A zinc finger lies at 3–34 (CPFCGKENTRVIDSRPADDCSSIRRRRQCDEC). The ATP-cone domain maps to 49–139 (LVVIKKDNNR…VYREFKDVNT (91 aa)).

The protein belongs to the NrdR family. Requires Zn(2+) as cofactor.

Negatively regulates transcription of bacterial ribonucleotide reductase nrd genes and operons by binding to NrdR-boxes. The sequence is that of Transcriptional repressor NrdR from Lachnoclostridium phytofermentans (strain ATCC 700394 / DSM 18823 / ISDg) (Clostridium phytofermentans).